Reading from the N-terminus, the 245-residue chain is 1-(5-phosphoribosyl)-5-[(5-phosphoribosylamino)methylideneamino] imidazole-4-carboxamide isomerase (245 aa).

Asp-7 acts as the Proton acceptor in catalysis. The active-site Proton donor is Asp-129.

This sequence belongs to the HisA/HisF family.

Its subcellular location is the cytoplasm. It catalyses the reaction 1-(5-phospho-beta-D-ribosyl)-5-[(5-phospho-beta-D-ribosylamino)methylideneamino]imidazole-4-carboxamide = 5-[(5-phospho-1-deoxy-D-ribulos-1-ylimino)methylamino]-1-(5-phospho-beta-D-ribosyl)imidazole-4-carboxamide. It functions in the pathway amino-acid biosynthesis; L-histidine biosynthesis; L-histidine from 5-phospho-alpha-D-ribose 1-diphosphate: step 4/9. This Shewanella loihica (strain ATCC BAA-1088 / PV-4) protein is 1-(5-phosphoribosyl)-5-[(5-phosphoribosylamino)methylideneamino] imidazole-4-carboxamide isomerase.